The primary structure comprises 30 residues: Poly-His-poly-Gly peptide 2 (30 aa).

Residues 1 to 18 (EDDHDHHHHHHHHHHHHG) are compositionally biased toward basic residues. A disordered region spans residues 1–30 (EDDHDHHHHHHHHHHHHGVGGGGGGGGGGA). A compositionally biased stretch (gly residues) spans 19–30 (VGGGGGGGGGGA).

In terms of tissue distribution, expressed by the venom gland.

Its subcellular location is the secreted. May serve as a metalloproteinase inhibitor during glandular storage. Their inhibition may be instantly disengaged, by dilution or physiochemical change, when venom is injected into tissue of the victim. This is Poly-His-poly-Gly peptide 2 from Atheris nitschei (Great lakes bush viper).